Here is a 139-residue protein sequence, read N- to C-terminus: Putative pre-16S rRNA nuclease (139 aa).

The protein belongs to the YqgF nuclease family.

The protein localises to the cytoplasm. Functionally, could be a nuclease involved in processing of the 5'-end of pre-16S rRNA. This Phocaeicola vulgatus (strain ATCC 8482 / DSM 1447 / JCM 5826 / CCUG 4940 / NBRC 14291 / NCTC 11154) (Bacteroides vulgatus) protein is Putative pre-16S rRNA nuclease.